The following is a 215-amino-acid chain: Short neuropeptide F (215 aa).

The N-terminal stretch at methionine 1–serine 22 is a signal peptide. The propeptide occupies glutamate 23–lysine 56. Residues phenylalanine 69 and phenylalanine 101 each carry the phenylalanine amide modification. A Tryptophan amide modification is found at tryptophan 129. Phenylalanine 157 bears the Phenylalanine amide mark. The propeptide occupies serine 160–lysine 215. The tract at residues aspartate 173 to lysine 215 is disordered.

It belongs to the NPY family.

The protein resides in the secreted. Functionally, plays a role in controlling food intake and regulating body size. The chain is Short neuropeptide F from Aedes aegypti (Yellowfever mosquito).